Here is a 155-residue protein sequence, read N- to C-terminus: Transcriptional regulator MraZ (155 aa).

2 consecutive SpoVT-AbrB domains span residues 15–62 (TYEN…GMDR) and 93–136 (SEEL…NPTA).

Belongs to the MraZ family. As to quaternary structure, forms oligomers.

It is found in the cytoplasm. Its subcellular location is the nucleoid. This Rhodospirillum rubrum (strain ATCC 11170 / ATH 1.1.1 / DSM 467 / LMG 4362 / NCIMB 8255 / S1) protein is Transcriptional regulator MraZ.